A 289-amino-acid chain; its full sequence is Eukaryotic translation initiation factor 3 subunit F (289 aa).

Residues 7-137 (VKVHPVVLFQ…LRAYVCVPLG (131 aa)) form the MPN domain.

Belongs to the eIF-3 subunit F family. In terms of assembly, component of the eukaryotic translation initiation factor 3 (eIF-3) complex.

Its subcellular location is the cytoplasm. Component of the eukaryotic translation initiation factor 3 (eIF-3) complex, which is involved in protein synthesis of a specialized repertoire of mRNAs and, together with other initiation factors, stimulates binding of mRNA and methionyl-tRNAi to the 40S ribosome. The eIF-3 complex specifically targets and initiates translation of a subset of mRNAs involved in cell proliferation. This is Eukaryotic translation initiation factor 3 subunit F from Bombyx mori (Silk moth).